The following is a 439-amino-acid chain: Cysteine--tRNA ligase (439 aa).

C28 contributes to the Zn(2+) binding site. A 'HIGH' region motif is present at residues 30 to 40 (ITVYDLCHIGH). Residues C209, H234, and E238 each contribute to the Zn(2+) site. Positions 266 to 270 (KMSKS) match the 'KMSKS' region motif. Position 269 (K269) interacts with ATP.

It belongs to the class-I aminoacyl-tRNA synthetase family. In terms of assembly, monomer. Zn(2+) serves as cofactor.

Its subcellular location is the cytoplasm. The catalysed reaction is tRNA(Cys) + L-cysteine + ATP = L-cysteinyl-tRNA(Cys) + AMP + diphosphate. This Shigella boydii serotype 4 (strain Sb227) protein is Cysteine--tRNA ligase.